The chain runs to 122 residues: Large ribosomal subunit protein bL12 (122 aa).

It belongs to the bacterial ribosomal protein bL12 family. In terms of assembly, homodimer. Part of the ribosomal stalk of the 50S ribosomal subunit. Forms a multimeric L10(L12)X complex, where L10 forms an elongated spine to which 2 to 4 L12 dimers bind in a sequential fashion. Binds GTP-bound translation factors.

In terms of biological role, forms part of the ribosomal stalk which helps the ribosome interact with GTP-bound translation factors. Is thus essential for accurate translation. This chain is Large ribosomal subunit protein bL12, found in Enterococcus faecalis (strain ATCC 700802 / V583).